We begin with the raw amino-acid sequence, 160 residues long: ATP synthase subunit b, chloroplastic (160 aa).

A helical transmembrane segment spans residues 12 to 31; the sequence is NVINIAILVVILIRFARQVV.

This sequence belongs to the ATPase B chain family. In terms of assembly, F-type ATPases have 2 components, F(1) - the catalytic core - and F(0) - the membrane proton channel. F(1) has five subunits: alpha(3), beta(3), gamma(1), delta(1), epsilon(1). F(0) has four main subunits: a(1), b(1), b'(1) and c(10-14). The alpha and beta chains form an alternating ring which encloses part of the gamma chain. F(1) is attached to F(0) by a central stalk formed by the gamma and epsilon chains, while a peripheral stalk is formed by the delta, b and b' chains.

The protein localises to the plastid. The protein resides in the chloroplast thylakoid membrane. In terms of biological role, f(1)F(0) ATP synthase produces ATP from ADP in the presence of a proton or sodium gradient. F-type ATPases consist of two structural domains, F(1) containing the extramembraneous catalytic core and F(0) containing the membrane proton channel, linked together by a central stalk and a peripheral stalk. During catalysis, ATP synthesis in the catalytic domain of F(1) is coupled via a rotary mechanism of the central stalk subunits to proton translocation. Functionally, component of the F(0) channel, it forms part of the peripheral stalk, linking F(1) to F(0). The polypeptide is ATP synthase subunit b, chloroplastic (Cyanidioschyzon merolae (strain NIES-3377 / 10D) (Unicellular red alga)).